A 475-amino-acid chain; its full sequence is MQKSTNSDTSVETLNSTRQGTGAVQMRIKNANSHHDRLSQSKSMILTDVGKVTEPISRHRRNHSQHILKDVIPPLEQLMVEKEGYLQKAKIADGGKKLRKNWSTSWIVLSSRRIEFYKESKQQALSNMKTGHKPESVDLCGAHIEWAKEKSSRKNVFQITTVSGNEFLLQSDIDFIILDWFHAIKNAIDRLPKDSSCPSRNLELFKIQRSSSTELLSHYDSDIKEQKPEHRKSLMFRLHHSASDTSDKNRVKSRLKKFITRRPSLKTLQEKGLIKDQIFGSHLHKVCERENSTVPWFVKQCIEAVEKRGLDVDGIYRVSGNLATIQKLRFIVNQEEKLNLDDSQWEDIHVVTGALKMFFRELPEPLFPYSFFEQFVEAIKKQDNNTRIEAVKSLVQKLPPPNRDTMKVLFGHLTKIVAKASKNLMSTQSLGIVFGPTLLRAENETGNMAIHMVYQNQIAELMLSEYSKIFGSEED.

A compositionally biased stretch (polar residues) spans 1-22; sequence MQKSTNSDTSVETLNSTRQGTG. The segment at 1-23 is disordered; that stretch reads MQKSTNSDTSVETLNSTRQGTGA. Serine 43, serine 103, serine 196, serine 199, and serine 243 each carry phosphoserine. In terms of domain architecture, PH spans 79-189; it reads MVEKEGYLQK…WFHAIKNAID (111 aa). The Rho-GAP domain occupies 281–470; that stretch reads SHLHKVCERE…LMLSEYSKIF (190 aa).

Expressed in lung, liver and lymphoid cells.

It localises to the cytoplasm. It is found in the membrane. Its function is as follows. GTPase activator for the Rho-type GTPases by converting them to an inactive GDP-bound state. Has activity toward RAC1. Overexpression results in an increase in actin stress fibers and cell contraction. The sequence is that of Rho GTPase-activating protein 15 (ARHGAP15) from Homo sapiens (Human).